The sequence spans 185 residues: Elongation factor P (185 aa).

The protein belongs to the elongation factor P family.

The protein localises to the cytoplasm. It functions in the pathway protein biosynthesis; polypeptide chain elongation. In terms of biological role, involved in peptide bond synthesis. Stimulates efficient translation and peptide-bond synthesis on native or reconstituted 70S ribosomes in vitro. Probably functions indirectly by altering the affinity of the ribosome for aminoacyl-tRNA, thus increasing their reactivity as acceptors for peptidyl transferase. The protein is Elongation factor P of Paraburkholderia phymatum (strain DSM 17167 / CIP 108236 / LMG 21445 / STM815) (Burkholderia phymatum).